We begin with the raw amino-acid sequence, 245 residues long: DNA polymerase sliding clamp (245 aa).

It belongs to the PCNA family. Homotrimer. The subunits circularize to form a toroid; DNA passes through its center. Replication factor C (RFC) is required to load the toroid on the DNA.

Functionally, sliding clamp subunit that acts as a moving platform for DNA processing. Responsible for tethering the catalytic subunit of DNA polymerase and other proteins to DNA during high-speed replication. The protein is DNA polymerase sliding clamp of Methanosarcina barkeri (strain Fusaro / DSM 804).